The chain runs to 262 residues: Zinc import ATP-binding protein ZnuC (262 aa).

The ABC transporter domain occupies 4 to 220 (LNLSGVRLSH…PEYLALFGPR (217 aa)). An ATP-binding site is contributed by 36 to 43 (GPNGAGKS). The tract at residues 238–262 (ADGSVLPLAEGGGEPHTHGPGCRHG) is disordered.

This sequence belongs to the ABC transporter superfamily. Zinc importer (TC 3.A.1.15.5) family. The complex is composed of two ATP-binding proteins (ZnuC), two transmembrane proteins (ZnuB) and a solute-binding protein (ZnuA).

The protein resides in the cell inner membrane. The catalysed reaction is Zn(2+)(out) + ATP(in) + H2O(in) = Zn(2+)(in) + ADP(in) + phosphate(in) + H(+)(in). Functionally, part of the ABC transporter complex ZnuABC involved in zinc import. Responsible for energy coupling to the transport system. The protein is Zinc import ATP-binding protein ZnuC of Paramagnetospirillum magneticum (strain ATCC 700264 / AMB-1) (Magnetospirillum magneticum).